A 339-amino-acid polypeptide reads, in one-letter code: Cyclin-Y-like protein 1 (339 aa).

Residues Q181–N263 form the Cyclin N-terminal domain.

The protein belongs to the cyclin family. Cyclin Y subfamily.

It localises to the cell membrane. Functionally, key regulator of Wnt signaling implicated in various biological processes such as embryonic neurogenesis. This chain is Cyclin-Y-like protein 1 (ccnyl1), found in Danio rerio (Zebrafish).